The chain runs to 661 residues: Zeaxanthin epoxidase, chloroplastic (661 aa).

The N-terminal 50 residues, 1-50 (MASTLFYNSMNLSAAVFSRTHFPIPINKDFPLEFSPCIHTDYHLRSRTRS), are a transit peptide targeting the chloroplast. Residues 82–110 (RILVAGGGIGGLVFALAAKKKGFDVVVFE) and 360–373 (ILTWGKGHVTLLGD) contribute to the FAD site. An FHA domain is found at 558–607 (CIIGSAPHGDVSGISIAIPKPQVSEMHARISYKDGAFYLTDLRSEHGTWI).

Requires FAD as cofactor.

The protein resides in the plastid. It localises to the chloroplast. It carries out the reaction all-trans-zeaxanthin + 4 reduced [2Fe-2S]-[ferredoxin] + 2 O2 + 4 H(+) = all-trans-violaxanthin + 4 oxidized [2Fe-2S]-[ferredoxin] + 2 H2O. The protein operates within plant hormone biosynthesis; abscisate biosynthesis. Functionally, converts zeaxanthin into antheraxanthin and subsequently violaxanthin. Involved in the epoxidation of zeaxanthin. This chain is Zeaxanthin epoxidase, chloroplastic, found in Prunus armeniaca (Apricot).